Here is a 190-residue protein sequence, read N- to C-terminus: GTP cyclohydrolase 1 (190 aa).

Zn(2+)-binding residues include Cys-75, His-78, and Cys-146.

This sequence belongs to the GTP cyclohydrolase I family. Homomer.

The enzyme catalyses GTP + H2O = 7,8-dihydroneopterin 3'-triphosphate + formate + H(+). The protein operates within cofactor biosynthesis; 7,8-dihydroneopterin triphosphate biosynthesis; 7,8-dihydroneopterin triphosphate from GTP: step 1/1. The sequence is that of GTP cyclohydrolase 1 from Campylobacter jejuni subsp. jejuni serotype O:6 (strain 81116 / NCTC 11828).